The chain runs to 187 residues: Acetyl-CoA decarbonylase/synthase complex subunit epsilon (187 aa).

The residue at position 1 (M1) is a Blocked amino end (Met).

This sequence belongs to the CdhB family. In terms of assembly, heterotetramer of two alpha and two epsilon subunits. The ACDS complex is made up of alpha, epsilon, beta, gamma and delta subunits with a probable stoichiometry of (alpha(2)epsilon(2))(4)-beta(8)-(gamma(1)delta(1))(8).

In terms of biological role, part of a complex that catalyzes the reversible cleavage of acetyl-CoA, allowing autotrophic growth from CO(2). The alpha-epsilon subcomponent functions as a carbon monoxide dehydrogenase. The precise role of the epsilon subunit is unclear; it may have a stabilizing role within the alpha(2)epsilon(2) component and/or be involved in electron transfer to FAD during a potential FAD-mediated CO oxidation. This chain is Acetyl-CoA decarbonylase/synthase complex subunit epsilon, found in Methanothrix soehngenii (Methanosaeta concilii).